Consider the following 120-residue polypeptide: Large ribosomal subunit protein bL20 (120 aa).

It belongs to the bacterial ribosomal protein bL20 family.

Its function is as follows. Binds directly to 23S ribosomal RNA and is necessary for the in vitro assembly process of the 50S ribosomal subunit. It is not involved in the protein synthesizing functions of that subunit. The polypeptide is Large ribosomal subunit protein bL20 (Methylobacillus flagellatus (strain ATCC 51484 / DSM 6875 / VKM B-1610 / KT)).